The sequence spans 89 residues: Probable Fe(2+)-trafficking protein (89 aa).

The protein belongs to the Fe(2+)-trafficking protein family.

Could be a mediator in iron transactions between iron acquisition and iron-requiring processes, such as synthesis and/or repair of Fe-S clusters in biosynthetic enzymes. The chain is Probable Fe(2+)-trafficking protein from Stenotrophomonas maltophilia (strain K279a).